Reading from the N-terminus, the 156-residue chain is Small ribosomal subunit protein uS7 (156 aa).

This sequence belongs to the universal ribosomal protein uS7 family. In terms of assembly, part of the 30S ribosomal subunit. Contacts proteins S9 and S11.

Functionally, one of the primary rRNA binding proteins, it binds directly to 16S rRNA where it nucleates assembly of the head domain of the 30S subunit. Is located at the subunit interface close to the decoding center, probably blocks exit of the E-site tRNA. This Teredinibacter turnerae (strain ATCC 39867 / T7901) protein is Small ribosomal subunit protein uS7.